Consider the following 615-residue polypeptide: Zinc metalloproteinase-disintegrin-like (615 aa).

An N-terminal signal peptide occupies residues 1–20; it reads MIQALLVTICLVGFPHQGSS. A propeptide spanning residues 21–195 is cleaved from the precursor; it reads IILESGNVKD…KMNFQSANNP (175 aa). The 197-residue stretch at 204–400 folds into the Peptidase M12B domain; the sequence is KYIKLAVVVD…DLPQCILNKP (197 aa). 3 disulfides stabilise this stretch: C315/C395, C355/C379, and C357/C362. Zn(2+) is bound at residue H340. E341 is a catalytic residue. Zn(2+) is bound by residues H344 and H350. The Disintegrin domain occupies 408-494; sequence PAVCGNNFVE…DCPMDGLQRN (87 aa). Positions 410, 413, 415, 417, and 423 each coordinate Ca(2+). Disulfide bonds link C411–C440, C422–C435, C424–C430, C434–C457, C448–C454, C453–C479, C466–C486, C473–C505, C498–C510, C517–C567, C532–C576, C545–C555, C562–C602, and C596–C608. A D/ECD-tripeptide motif is present at residues 472–474; the sequence is DCD.

The protein belongs to the venom metalloproteinase (M12B) family. P-III subfamily. P-IIIa sub-subfamily. Monomer. Zn(2+) serves as cofactor. Expressed by the venom gland.

Its subcellular location is the secreted. Its function is as follows. Snake venom zinc metalloprotease that may induce platelet aggregation. In Cerberus rynchops (Dog-faced water snake), this protein is Zinc metalloproteinase-disintegrin-like.